A 1029-amino-acid polypeptide reads, in one-letter code: Exportin-T (1029 aa).

The protein belongs to the exportin family.

Its subcellular location is the nucleus. It localises to the cytoplasm. Functionally, tRNA nucleus export receptor which facilitates tRNA translocation across the nuclear pore complex. Involved in pre-tRNA splicing, probably by affecting the interaction of pre-tRNA with splicing endonuclease. This Aspergillus clavatus (strain ATCC 1007 / CBS 513.65 / DSM 816 / NCTC 3887 / NRRL 1 / QM 1276 / 107) protein is Exportin-T (los1).